We begin with the raw amino-acid sequence, 845 residues long: uncharacterized protein (845 aa).

Disordered stretches follow at residues 17-37 (RRKQDALHSPSLNMDKKNDQP) and 550-573 (AATEAEVEDQNSERNDDNALNESL). The stretch at 622–707 (LSEQRFEREN…ELKKSNEHTR (86 aa)) forms a coiled coil.

This is an uncharacterized protein from Saccharum officinarum (Sugarcane).